The chain runs to 631 residues: MSATKLTRREQRARAQHFIDTLEGTAFPNSKRIYITGTHPGVRVPMREIQLSPTLIGGSKEQPQYEENEAIPVYDTSGPYGDPQIAINVQQGLAKLRQPWIDARGDTEELTVRSSDYTRTRLADDGLDELRFSGLLTPKRAKTGRRVTQLHYARQGIITPEMEFIAIRENMGRERIRSEVLRHQHPGMSFGAHLPENITAEFVRDEVAAGRAIIPANINHPESEPMIIGRNFLVKVNANIGNSAVTSSIEEEVEKLVWSTRWGADTVMDLSTGRYIHETREWILRNSPVPIGTVPIYQALEKVNGIAEDLTWEAFRDTLLEQAEQGVDYFTIHAGVLLRYVPMTAKRLTGIVSRGGSIMAKWCLSHHQENFLYQHFREICEICAAYDVSLSLGDGLRPGSIQDANDEAQFAELHTLGELTKIAWEYDVQVMIEGPGHVPMQMIRRNMTEELEHCHEAPFYTLGPLTTDIAPGYDHFTSGIGAAMIGWFGCAMLCYVTPKEHLGLPNKEDVKQGLITYKIAVHAADLAKGHPGAQIRDNAMSKARFEFRWEDQFNLALDPFTARAYHDETLPQESGKVAHFCSMCGPKFCSMKISQEVRDYAAAQTIEVGMADMSENFRARGGEIYLRKEEA.

Substrate contacts are provided by residues N239, M268, Y297, H333, 353–355, 394–397, and E433; these read SRG and DGLR. H437 lines the Zn(2+) pocket. Y460 is a binding site for substrate. Position 501 (H501) interacts with Zn(2+). Residues C581, C584, and C589 each coordinate [4Fe-4S] cluster.

Belongs to the ThiC family. Homodimer. It depends on [4Fe-4S] cluster as a cofactor.

The catalysed reaction is 5-amino-1-(5-phospho-beta-D-ribosyl)imidazole + S-adenosyl-L-methionine = 4-amino-2-methyl-5-(phosphooxymethyl)pyrimidine + CO + 5'-deoxyadenosine + formate + L-methionine + 3 H(+). The protein operates within cofactor biosynthesis; thiamine diphosphate biosynthesis. Its function is as follows. Catalyzes the synthesis of the hydroxymethylpyrimidine phosphate (HMP-P) moiety of thiamine from aminoimidazole ribotide (AIR) in a radical S-adenosyl-L-methionine (SAM)-dependent reaction. The protein is Phosphomethylpyrimidine synthase of Shigella sonnei (strain Ss046).